We begin with the raw amino-acid sequence, 373 residues long: Spermidine/putrescine import ATP-binding protein PotA (373 aa).

In terms of domain architecture, ABC transporter spans Ile-11–Ile-241. Position 43–50 (Gly-43–Thr-50) interacts with ATP.

It belongs to the ABC transporter superfamily. Spermidine/putrescine importer (TC 3.A.1.11.1) family. As to quaternary structure, the complex is composed of two ATP-binding proteins (PotA), two transmembrane proteins (PotB and PotC) and a solute-binding protein (PotD).

It is found in the cell inner membrane. It catalyses the reaction ATP + H2O + polyamine-[polyamine-binding protein]Side 1 = ADP + phosphate + polyamineSide 2 + [polyamine-binding protein]Side 1.. Functionally, part of the ABC transporter complex PotABCD involved in spermidine/putrescine import. Responsible for energy coupling to the transport system. The chain is Spermidine/putrescine import ATP-binding protein PotA from Mannheimia succiniciproducens (strain KCTC 0769BP / MBEL55E).